The sequence spans 911 residues: Pesticidal crystal protein Cry1Af (911 aa).

Belongs to the delta endotoxin family.

Functionally, promotes colloidosmotic lysis by binding to the midgut epithelial cells of both dipteran and lepidopteran larvae. The protein is Pesticidal crystal protein Cry1Af (cry1Af) of Bacillus thuringiensis.